The following is a 228-amino-acid chain: MDIERVEQVRAVERLAHRRGLALMPRAGLAAADFVAARLPAGAQVLALAGPGNNGGDALVAATLLQARGYRVAVVMPAGPARLPDDARRAWQDWCAAGGQASADLPAHAPALVIDGLFGIGLARPLGGAWQGLIDQVNAWRVPVLALDVPSGLSAASGQPLGDPPGRPVRATWTLSFIGVPAALRAPGAAAWCGQQHLSLLGLTPAFLAEAVGPCGQATATAARRSGP.

The YjeF N-terminal domain occupies 9 to 209 (VRAVERLAHR…LLGLTPAFLA (201 aa)). 53–57 (NNGGD) is a (6S)-NADPHX binding site. Residues asparagine 54 and aspartate 115 each contribute to the K(+) site. (6S)-NADPHX-binding positions include 119–125 (GIGLARP) and aspartate 148. Serine 151 contacts K(+).

It belongs to the NnrE/AIBP family. K(+) serves as cofactor.

The enzyme catalyses (6R)-NADHX = (6S)-NADHX. It catalyses the reaction (6R)-NADPHX = (6S)-NADPHX. Catalyzes the epimerization of the S- and R-forms of NAD(P)HX, a damaged form of NAD(P)H that is a result of enzymatic or heat-dependent hydration. This is a prerequisite for the S-specific NAD(P)H-hydrate dehydratase to allow the repair of both epimers of NAD(P)HX. This is NAD(P)H-hydrate epimerase from Bordetella bronchiseptica (strain ATCC BAA-588 / NCTC 13252 / RB50) (Alcaligenes bronchisepticus).